We begin with the raw amino-acid sequence, 443 residues long: Tubulin beta-3 chain (443 aa).

Residues glutamine 11, glutamate 69, serine 138, glycine 142, threonine 143, glycine 144, asparagine 204, and asparagine 226 each coordinate GTP. Glutamate 69 contacts Mg(2+).

This sequence belongs to the tubulin family. In terms of assembly, dimer of alpha and beta chains. A typical microtubule is a hollow water-filled tube with an outer diameter of 25 nm and an inner diameter of 15 nM. Alpha-beta heterodimers associate head-to-tail to form protofilaments running lengthwise along the microtubule wall with the beta-tubulin subunit facing the microtubule plus end conferring a structural polarity. Microtubules usually have 13 protofilaments but different protofilament numbers can be found in some organisms and specialized cells. Requires Mg(2+) as cofactor.

The protein resides in the cytoplasm. The protein localises to the cytoskeleton. Its function is as follows. Tubulin is the major constituent of microtubules, a cylinder consisting of laterally associated linear protofilaments composed of alpha- and beta-tubulin heterodimers. Microtubules grow by the addition of GTP-tubulin dimers to the microtubule end, where a stabilizing cap forms. Below the cap, tubulin dimers are in GDP-bound state, owing to GTPase activity of alpha-tubulin. The polypeptide is Tubulin beta-3 chain (TUB-3) (Echinococcus multilocularis (Fox tapeworm)).